Consider the following 65-residue polypeptide: Small, acid-soluble spore protein Tlp (65 aa).

The protein belongs to the Tlp family.

It is found in the spore core. The polypeptide is Small, acid-soluble spore protein Tlp (Bacillus cereus (strain B4264)).